A 646-amino-acid polypeptide reads, in one-letter code: Long-chain fatty acid transport protein 1 (646 aa).

Over 1 to 13 (MRAPGAGAASVVS) the chain is Extracellular. The helical transmembrane segment at 14–34 (LALLWLLGLPWTWSAAAALGV) threads the bilayer. Residues 35 to 646 (YVGSGGWRFL…TRICSGAFAL (612 aa)) are Cytoplasmic-facing. Residues 191-475 (EVSGHLGKSL…YVSESATSKK (285 aa)) form a sufficient for oligomerization region. Residue 246 to 257 (YIYTSGTTGLPK) coordinates AMP.

Belongs to the ATP-dependent AMP-binding enzyme family. As to quaternary structure, self-associates. May function as a homodimer. Interacts with EPRS1; mediates the translocation of SLC27A1 from the cytoplasm to the plasma membrane thereby increasing the uptake of long-chain fatty acids. Interacts with DGAT2 and this interaction is enhanced in the presence of ZFYVE1. In terms of tissue distribution, highest levels of expression are detected in muscle and adipose tissue small, intermediate levels in small intestine, and barely detectable in liver. Expressed in brain gray matter.

Its subcellular location is the cell membrane. The protein resides in the endomembrane system. It localises to the cytoplasm. It catalyses the reaction a fatty acid(in) = a fatty acid(out). The enzyme catalyses (9Z)-octadecenoate(out) = (9Z)-octadecenoate(in). The catalysed reaction is hexadecanoate(out) = hexadecanoate(in). It carries out the reaction (9Z,12Z)-octadecadienoate(out) = (9Z,12Z)-octadecadienoate(in). It catalyses the reaction (5Z,8Z,11Z,14Z)-eicosatetraenoate(out) = (5Z,8Z,11Z,14Z)-eicosatetraenoate(in). The enzyme catalyses a long-chain fatty acid + ATP + CoA = a long-chain fatty acyl-CoA + AMP + diphosphate. The catalysed reaction is (5Z,8Z,11Z,14Z)-eicosatetraenoate + ATP + CoA = (5Z,8Z,11Z,14Z)-eicosatetraenoyl-CoA + AMP + diphosphate. It carries out the reaction a very long-chain fatty acid + ATP + CoA = a very long-chain fatty acyl-CoA + AMP + diphosphate. It catalyses the reaction tetracosanoate + ATP + CoA = tetracosanoyl-CoA + AMP + diphosphate. Inhibited by Triacsin C. Its function is as follows. Mediates the import of long-chain fatty acids (LCFA) into the cell by facilitating their transport at the plasma membrane. Also functions as an acyl-CoA ligase catalyzing the ATP-dependent formation of fatty acyl-CoA using LCFA and very-long-chain fatty acids (VLCFA) as substrates, which prevents fatty acid efflux from cells and might drive more fatty acid uptake. May act directly as a bona fide transporter, or alternatively, in a cytoplasmic or membrane-associated multimeric protein complex to trap and draw fatty acids towards accumulation. Plays a pivotal role in regulating available LCFA substrates from exogenous sources in tissues undergoing high levels of beta-oxidation or triglyceride synthesis. May be involved in regulation of cholesterol metabolism. Probably involved in fatty acid transport across the blood barrier. This chain is Long-chain fatty acid transport protein 1, found in Homo sapiens (Human).